A 296-amino-acid polypeptide reads, in one-letter code: Elongation factor Ts (296 aa).

Residues 82–85 (TDFV) form an involved in Mg(2+) ion dislocation from EF-Tu region.

It belongs to the EF-Ts family.

Its subcellular location is the cytoplasm. Associates with the EF-Tu.GDP complex and induces the exchange of GDP to GTP. It remains bound to the aminoacyl-tRNA.EF-Tu.GTP complex up to the GTP hydrolysis stage on the ribosome. The sequence is that of Elongation factor Ts from Aromatoleum aromaticum (strain DSM 19018 / LMG 30748 / EbN1) (Azoarcus sp. (strain EbN1)).